Here is a 383-residue protein sequence, read N- to C-terminus: uncharacterized protein (383 aa).

4 disordered regions span residues 1–30 (MDLC…PTCT), 114–144 (ETKP…STAS), 262–289 (GEKR…ARTS), and 341–360 (AKDP…NSPQ). Residues 10 to 26 (DLENGENNEIQSTEETE) are compositionally biased toward acidic residues. The span at 128-141 (SSPSQTQAAPQGPS) shows a compositional bias: low complexity. The span at 262 to 271 (GEKRPSELAK) shows a compositional bias: basic and acidic residues.

This is an uncharacterized protein from Macaca fascicularis (Crab-eating macaque).